Consider the following 306-residue polypeptide: Recombination-associated protein RdgC (306 aa).

Belongs to the RdgC family.

Its subcellular location is the cytoplasm. It is found in the nucleoid. In terms of biological role, may be involved in recombination. The polypeptide is Recombination-associated protein RdgC (Pseudomonas fluorescens (strain Pf0-1)).